The sequence spans 251 residues: Transcription initiation factor TFIID subunit 9B (251 aa).

N-acetylmethionine is present on Met-1. Ser-147 carries the phosphoserine modification. Residues Thr-159 and Thr-174 each carry the phosphothreonine modification. Ser-177 is modified (phosphoserine). The interval 229–251 (QNTANEANPLKRKHEDDDDNDIM) is disordered.

The protein belongs to the TAF9 family. In terms of assembly, binds TAF5 and TAF6. Component of TFIID and the TATA-binding protein-free TAF complex (TFTC). TFIID is composed of TATA binding protein (TBP) and a number of TBP-associated factors (TAFs). Binds N-terminal domain of p53/TP53 which is essential for transcription.

Its subcellular location is the nucleus. Its function is as follows. Essential for cell viability. TAF9 and TAF9B are involved in transcriptional activation as well as repression of distinct but overlapping sets of genes. May have a role in gene regulation associated with apoptosis. TAFs are components of the transcription factor IID (TFIID) complex, the TBP-free TAFII complex (TFTC), the PCAF histone acetylase complex and the STAGA transcription coactivator-HAT complex. TFIID or TFTC are essential for the regulation of RNA polymerase II-mediated transcription. This chain is Transcription initiation factor TFIID subunit 9B (TAF9B), found in Homo sapiens (Human).